Consider the following 227-residue polypeptide: Cytochrome c oxidase subunit 2 (227 aa).

Over 1 to 14 (MAYPMQLGFQDATS) the chain is Mitochondrial intermembrane. The helical transmembrane segment at 15–45 (PIMEELLHFHDHTLMIVFLISSLVLYIISLM) threads the bilayer. The Mitochondrial matrix segment spans residues 46–59 (LTTKLTHTSTMDAQ). Residues 60 to 87 (EVETIWTILPAIILILIALPSLRILYMM) traverse the membrane as a helical segment. The Mitochondrial intermembrane segment spans residues 88 to 227 (DEINNPSLTV…YFEKWSASML (140 aa)). Residues H161, C196, E198, C200, H204, and M207 each coordinate Cu cation. A Mg(2+)-binding site is contributed by E198. Phosphotyrosine is present on Y218.

It belongs to the cytochrome c oxidase subunit 2 family. As to quaternary structure, component of the cytochrome c oxidase (complex IV, CIV), a multisubunit enzyme composed of 14 subunits. The complex is composed of a catalytic core of 3 subunits MT-CO1, MT-CO2 and MT-CO3, encoded in the mitochondrial DNA, and 11 supernumerary subunits COX4I, COX5A, COX5B, COX6A, COX6B, COX6C, COX7A, COX7B, COX7C, COX8 and NDUFA4, which are encoded in the nuclear genome. The complex exists as a monomer or a dimer and forms supercomplexes (SCs) in the inner mitochondrial membrane with NADH-ubiquinone oxidoreductase (complex I, CI) and ubiquinol-cytochrome c oxidoreductase (cytochrome b-c1 complex, complex III, CIII), resulting in different assemblies (supercomplex SCI(1)III(2)IV(1) and megacomplex MCI(2)III(2)IV(2)). Found in a complex with TMEM177, COA6, COX18, COX20, SCO1 and SCO2. Interacts with TMEM177 in a COX20-dependent manner. Interacts with COX20. Interacts with COX16. Cu cation serves as cofactor.

Its subcellular location is the mitochondrion inner membrane. It catalyses the reaction 4 Fe(II)-[cytochrome c] + O2 + 8 H(+)(in) = 4 Fe(III)-[cytochrome c] + 2 H2O + 4 H(+)(out). Functionally, component of the cytochrome c oxidase, the last enzyme in the mitochondrial electron transport chain which drives oxidative phosphorylation. The respiratory chain contains 3 multisubunit complexes succinate dehydrogenase (complex II, CII), ubiquinol-cytochrome c oxidoreductase (cytochrome b-c1 complex, complex III, CIII) and cytochrome c oxidase (complex IV, CIV), that cooperate to transfer electrons derived from NADH and succinate to molecular oxygen, creating an electrochemical gradient over the inner membrane that drives transmembrane transport and the ATP synthase. Cytochrome c oxidase is the component of the respiratory chain that catalyzes the reduction of oxygen to water. Electrons originating from reduced cytochrome c in the intermembrane space (IMS) are transferred via the dinuclear copper A center (CU(A)) of subunit 2 and heme A of subunit 1 to the active site in subunit 1, a binuclear center (BNC) formed by heme A3 and copper B (CU(B)). The BNC reduces molecular oxygen to 2 water molecules using 4 electrons from cytochrome c in the IMS and 4 protons from the mitochondrial matrix. This Syncerus caffer (African buffalo) protein is Cytochrome c oxidase subunit 2 (MT-CO2).